The sequence spans 724 residues: MRRALLTGIQCHACRNNVVRSFVSVSGVTFMPLASGSWSASQTRPPPLSRNFSSQHAKLFSSHPSDNAEVAVDPMPEKDITEETVKPPEEPEEHIPWYLQEELEATTSHPLRKQQPLPPLPENPPPILNGLLEHISIDLGLDDISLLDLRKLDPPPALGANLIMIFGTARGVKHLNVSADRLCRWLRTTYKLRPDADGLLGRNELKIKLRRKARRAKLAKSAKSTLTAPDDGITTGWICVDVGTVEGGQFRKPEEEARKVGFVGFGTFVQGTRIVVQLMTEEKREEVDLEGLWRRTLERNSLENEGLPQPQAEEPPQEAGDIHKPSSVTPAHISHRVSHAAQISVNYEQRRGISTGSRQNRDLEEDGLNYAPINPDGTIKLPELISESTPLTSLTSRLRNISPYEAIYHLGQDVNDTNSTTFLEQFYRKLSKAPDDLASAQRIKLICIAIMLHHPGYGKTDLFKVTQEHFISNYGVTPPQFLEILDALLSFKPDLTSDPPNLLLPAADMELALQTIDHVGLRGIDLLNSTVWMKLFVGASFRVPVCPVRDLMNAPVIGNRTPVSLDTYETVNRVQTRLLKVKTAAKIELSANEYLSLLRVLFDHEWYSMFWDTWEEIALAGMPRDKSLYVFLFQLHAESDGWEGWKSTLLNCIPMMERENPPVYMDRELAEVIARCLAIAHPEIMDRVERNEPSPLVRLWHRCRIAVEKEVPLRGAQNPPSTMS.

The transit peptide at Met-1 to Phe-52 directs the protein to the mitochondrion. Disordered stretches follow at residues Gly-36 to Pro-76 and Asn-300 to His-323. Residues Pro-308–Ala-319 are compositionally biased toward low complexity.

Belongs to the ATP25 family.

The protein resides in the mitochondrion inner membrane. Its function is as follows. Probable mitochondrial mRNA stabilization factor. The polypeptide is ATPase synthesis protein 25, mitochondrial (ATP25) (Blastomyces gilchristii (strain SLH14081) (Blastomyces dermatitidis)).